A 284-amino-acid polypeptide reads, in one-letter code: Protein phosphatase 1 regulatory subunit 3B (284 aa).

Residues 61 to 64 carry the PP1-binding motif motif; that stretch reads RVSF. Positions 124–232 constitute a CBM21 domain; the sequence is RNRLQTNHVC…SNKGKNYRIT (109 aa). Position 260 is a phosphoserine (S260).

As to quaternary structure, interacts with glycogen, PPP1CC catalytic subunit of PP1 and PYGL. Associates with glycogen particles. Forms complexes with debranching enzyme, glycogen phosphorylase, glycogen synthase and phosphorylase kinase which is necessary for its regulation of PP1 activity. Highly expressed in liver (at protein level). Expressed predominantly in liver. Expressed moderately in heart. Expressed weakly in prostate, stomach, thyroid, lung, kidney, spleen and skeletal muscle.

Its function is as follows. Acts as a glycogen-targeting subunit for phosphatase PP1. Facilitates interaction of the PP1 with enzymes of the glycogen metabolism and regulates its activity. Suppresses the rate at which PP1 dephosphorylates (inactivates) glycogen phosphorylase and enhances the rate at which it activates glycogen synthase and therefore limits glycogen breakdown. Its activity is inhibited by PYGL, resulting in inhibition of the glycogen synthase and glycogen phosphorylase phosphatase activities of PP1. Dramatically increases basal and insulin-stimulated glycogen synthesis upon overexpression in hepatocytes. The chain is Protein phosphatase 1 regulatory subunit 3B (Ppp1r3b) from Mus musculus (Mouse).